Consider the following 209-residue polypeptide: tRNA (guanine-N(7)-)-methyltransferase (209 aa).

The S-adenosyl-L-methionine site is built by E40, E65, and D114. D114 is a catalytic residue. Substrate-binding positions include D150 and 188–191; that span reads TAFE.

This sequence belongs to the class I-like SAM-binding methyltransferase superfamily. TrmB family.

The catalysed reaction is guanosine(46) in tRNA + S-adenosyl-L-methionine = N(7)-methylguanosine(46) in tRNA + S-adenosyl-L-homocysteine. Its pathway is tRNA modification; N(7)-methylguanine-tRNA biosynthesis. In terms of biological role, catalyzes the formation of N(7)-methylguanine at position 46 (m7G46) in tRNA. This Bdellovibrio bacteriovorus (strain ATCC 15356 / DSM 50701 / NCIMB 9529 / HD100) protein is tRNA (guanine-N(7)-)-methyltransferase.